Consider the following 378-residue polypeptide: Mannitol-1-phosphate 5-dehydrogenase (378 aa).

Position 4-15 (4-15 (SVHFGAGNIGRG)) interacts with NAD(+).

The protein belongs to the mannitol dehydrogenase family.

The catalysed reaction is D-mannitol 1-phosphate + NAD(+) = beta-D-fructose 6-phosphate + NADH + H(+). This chain is Mannitol-1-phosphate 5-dehydrogenase, found in Streptococcus pneumoniae (strain ATCC BAA-255 / R6).